The chain runs to 552 residues: Berberine bridge enzyme-like 6 (552 aa).

The signal sequence occupies residues 1-16 (MKEAFVFLLCLTNKFP). Cys56 and Cys119 form a disulfide bridge. N-linked (GlcNAc...) asparagine glycans are attached at residues Asn76, Asn161, Asn280, Asn364, Asn419, and Asn463. Positions 93 to 270 (FSSPNFKKLL…LSWKINLVEV (178 aa)) constitute an FAD-binding PCMH-type domain. Residues 134–196 (HDNEGFSYMS…QTLAFPAGVC (63 aa)) constitute a cross-link (6-(S-cysteinyl)-8alpha-(pros-histidyl)-FAD (His-Cys)).

Belongs to the oxygen-dependent FAD-linked oxidoreductase family. The cofactor is FAD. In terms of processing, the FAD cofactor is bound via a bicovalent 6-S-cysteinyl, 8alpha-N1-histidyl FAD linkage.

Its subcellular location is the secreted. The protein localises to the cell wall. Its function is as follows. Probable flavin-dependent oxidoreductase. In Arabidopsis thaliana (Mouse-ear cress), this protein is Berberine bridge enzyme-like 6.